The following is a 232-amino-acid chain: Phosphatidylserine decarboxylase proenzyme (232 aa).

S190 functions as the Schiff-base intermediate with substrate; via pyruvic acid in the catalytic mechanism. S190 carries the post-translational modification Pyruvic acid (Ser); by autocatalysis.

It belongs to the phosphatidylserine decarboxylase family. PSD-A subfamily. In terms of assembly, heterodimer of a large membrane-associated beta subunit and a small pyruvoyl-containing alpha subunit. The cofactor is pyruvate. Is synthesized initially as an inactive proenzyme. Formation of the active enzyme involves a self-maturation process in which the active site pyruvoyl group is generated from an internal serine residue via an autocatalytic post-translational modification. Two non-identical subunits are generated from the proenzyme in this reaction, and the pyruvate is formed at the N-terminus of the alpha chain, which is derived from the carboxyl end of the proenzyme. The post-translation cleavage follows an unusual pathway, termed non-hydrolytic serinolysis, in which the side chain hydroxyl group of the serine supplies its oxygen atom to form the C-terminus of the beta chain, while the remainder of the serine residue undergoes an oxidative deamination to produce ammonia and the pyruvoyl prosthetic group on the alpha chain.

The protein localises to the cell membrane. It carries out the reaction a 1,2-diacyl-sn-glycero-3-phospho-L-serine + H(+) = a 1,2-diacyl-sn-glycero-3-phosphoethanolamine + CO2. The protein operates within phospholipid metabolism; phosphatidylethanolamine biosynthesis; phosphatidylethanolamine from CDP-diacylglycerol: step 2/2. Its function is as follows. Catalyzes the formation of phosphatidylethanolamine (PtdEtn) from phosphatidylserine (PtdSer). This chain is Phosphatidylserine decarboxylase proenzyme, found in Rhizobium rhizogenes (strain K84 / ATCC BAA-868) (Agrobacterium radiobacter).